The chain runs to 153 residues: Aspartate carbamoyltransferase regulatory chain (153 aa).

Residues cysteine 109, cysteine 114, cysteine 138, and cysteine 141 each coordinate Zn(2+).

The protein belongs to the PyrI family. Contains catalytic and regulatory chains. It depends on Zn(2+) as a cofactor.

Functionally, involved in allosteric regulation of aspartate carbamoyltransferase. The protein is Aspartate carbamoyltransferase regulatory chain of Nitrosopumilus maritimus (strain SCM1).